The primary structure comprises 261 residues: Thioesterase TesA (261 aa).

The tract at residues 1-24 (MLARHGPRYGGSVNGHSDDSSGDA) is disordered. Active-site residues include S104, D208, and H236.

It belongs to the thioesterase family.

It carries out the reaction a fatty acyl-CoA + H2O = a fatty acid + CoA + H(+). In terms of biological role, involved in the synthesis of both phthiocerol dimycocerosates (PDIMs) and phenolic glycolipids (PGLs), which are structurally related lipids non-covalently bound to the outer cell wall layer of M.tuberculosis and are important virulence factors. The sequence is that of Thioesterase TesA (tesA) from Mycobacterium bovis (strain ATCC BAA-935 / AF2122/97).